Reading from the N-terminus, the 301-residue chain is Prestalk A differentiation protein A (301 aa).

It belongs to the NmrA-type oxidoreductase family.

Functionally, involved in development and cell differentiation. The protein is Prestalk A differentiation protein A (padA) of Dictyostelium discoideum (Social amoeba).